A 442-amino-acid polypeptide reads, in one-letter code: UDP-N-acetylmuramoylalanine--D-glutamate ligase (442 aa).

Position 109 to 115 (109 to 115) interacts with ATP; the sequence is GSNGKTT.

The protein belongs to the MurCDEF family.

The protein resides in the cytoplasm. The catalysed reaction is UDP-N-acetyl-alpha-D-muramoyl-L-alanine + D-glutamate + ATP = UDP-N-acetyl-alpha-D-muramoyl-L-alanyl-D-glutamate + ADP + phosphate + H(+). It functions in the pathway cell wall biogenesis; peptidoglycan biosynthesis. In terms of biological role, cell wall formation. Catalyzes the addition of glutamate to the nucleotide precursor UDP-N-acetylmuramoyl-L-alanine (UMA). This is UDP-N-acetylmuramoylalanine--D-glutamate ligase from Solibacter usitatus (strain Ellin6076).